We begin with the raw amino-acid sequence, 211 residues long: Probable metallo-hydrolase YqgX (211 aa).

Residues histidine 54, histidine 56, aspartate 58, histidine 59, histidine 130, aspartate 149, and histidine 190 each contribute to the Zn(2+) site.

The protein belongs to the metallo-beta-lactamase superfamily. Glyoxalase II family. The cofactor is Zn(2+).

This Bacillus subtilis (strain 168) protein is Probable metallo-hydrolase YqgX (yqgX).